A 182-amino-acid chain; its full sequence is Lipoprotein signal peptidase (182 aa).

Transmembrane regions (helical) follow at residues 21–41 (LLLS…VLAV), 74–94 (GYTW…FWMG), and 98–118 (VSPW…GNLV). Active-site residues include D134 and D148. The chain crosses the membrane as a helical span at residues 146–166 (VADPSVVGGAILLVVLSIFGY).

The protein belongs to the peptidase A8 family.

It localises to the cell membrane. It catalyses the reaction Release of signal peptides from bacterial membrane prolipoproteins. Hydrolyzes -Xaa-Yaa-Zaa-|-(S,diacylglyceryl)Cys-, in which Xaa is hydrophobic (preferably Leu), and Yaa (Ala or Ser) and Zaa (Gly or Ala) have small, neutral side chains.. The protein operates within protein modification; lipoprotein biosynthesis (signal peptide cleavage). This protein specifically catalyzes the removal of signal peptides from prolipoproteins. The protein is Lipoprotein signal peptidase of Mycobacterium avium (strain 104).